The following is a 214-amino-acid chain: uncharacterized protein (214 aa).

The next 7 helical transmembrane spans lie at 4–23 (VSIVEIFLIISLPLLFFSSF), 35–57 (SFVHGAVLAVPLLLLRSFFLGYY), 67–89 (QWMRFFLFDYVFPLFCLPFFLFT), 96–118 (VSLVSGVSALFGAYTSFFFVHVY), 128–150 (ARVMTLVLYMTNLLQLHAHVSFS), 155–177 (LPLLGLIAALCIFLLMGAFSATV), and 187–209 (TVVYTSMLAGAGGVALLTHFFAV).

It localises to the cell membrane. This is an uncharacterized protein from Treponema pallidum (strain Nichols).